Consider the following 469-residue polypeptide: GTPase Der (469 aa).

EngA-type G domains are found at residues 3–166 and 177–350; these read PVIA…PEDE and LRLA…ESAN. Residues 9–16, 56–60, 118–121, 183–190, 230–234, and 295–298 contribute to the GTP site; these read GRPNVGKS, DTGGI, NKVD, DTAGV, and NKWD. Residues 351-435 form the KH-like domain; the sequence is LKVSPAKLTQ…PVKIEFKTSE (85 aa).

It belongs to the TRAFAC class TrmE-Era-EngA-EngB-Septin-like GTPase superfamily. EngA (Der) GTPase family. Associates with the 50S ribosomal subunit.

Functionally, GTPase that plays an essential role in the late steps of ribosome biogenesis. This Acinetobacter baumannii (strain SDF) protein is GTPase Der.